Reading from the N-terminus, the 82-residue chain is Small ribosomal subunit protein bS18 (82 aa).

It belongs to the bacterial ribosomal protein bS18 family. In terms of assembly, part of the 30S ribosomal subunit. Forms a tight heterodimer with protein bS6.

In terms of biological role, binds as a heterodimer with protein bS6 to the central domain of the 16S rRNA, where it helps stabilize the platform of the 30S subunit. This is Small ribosomal subunit protein bS18 from Bartonella bacilliformis (strain ATCC 35685 / KC583 / Herrer 020/F12,63).